Here is a 135-residue protein sequence, read N- to C-terminus: Small ribosomal subunit protein uS11 (135 aa).

Belongs to the universal ribosomal protein uS11 family. In terms of assembly, part of the 30S ribosomal subunit. Interacts with proteins S7 and S18. Binds to IF-3.

Located on the platform of the 30S subunit, it bridges several disparate RNA helices of the 16S rRNA. Forms part of the Shine-Dalgarno cleft in the 70S ribosome. This Solibacter usitatus (strain Ellin6076) protein is Small ribosomal subunit protein uS11.